The sequence spans 207 residues: Large ribosomal subunit protein bL25 (207 aa).

It belongs to the bacterial ribosomal protein bL25 family. CTC subfamily. Part of the 50S ribosomal subunit; part of the 5S rRNA/L5/L18/L25 subcomplex. Contacts the 5S rRNA. Binds to the 5S rRNA independently of L5 and L18.

Functionally, this is one of the proteins that binds to the 5S RNA in the ribosome where it forms part of the central protuberance. The chain is Large ribosomal subunit protein bL25 from Dictyoglomus turgidum (strain DSM 6724 / Z-1310).